Here is a 495-residue protein sequence, read N- to C-terminus: Heat stress transcription factor A-1a (495 aa).

A DNA-binding region spans residues 50–144 (PPPFLSKTYD…LLKKISRRKS (95 aa)). The segment at 140 to 164 (SRRKSVQGHGSSSSNPQSQQLSQGQ) is disordered. Residues 146 to 164 (QGHGSSSSNPQSQQLSQGQ) are compositionally biased toward low complexity. Positions 172-238 (SCVEVGKFGL…QIMSFLAKAV (67 aa)) are hydrophobic repeat HR-A/B. A disordered region spans residues 255 to 288 (NMHVTEANKKRRLREDSTAATESNSHSHSLEASD). A Nuclear localization signal motif is present at residues 262 to 268 (NKKRRLR). Positions 272-281 (TAATESNSHS) are enriched in polar residues. An AHA motif is present at residues 433 to 442 (FEFLEEYMPE). The interval 445 to 477 (VFGDATTLENNNNNNNNNNNNNNNNNNNNTNGR) is disordered. The segment covering 454–473 (NNNNNNNNNNNNNNNNNNNN) has biased composition (low complexity). Positions 482 to 489 (LIEELGLL) match the Nuclear export signal motif.

Belongs to the HSF family. Class A subfamily. Homotrimer. Interacts with HSP70-1 and HSP70-4. Binds to CRK1. Binds to HSBP. In terms of processing, exhibits temperature-dependent phosphorylation. Phosphorylated by CRK1. Constitutively expressed.

It is found in the cytoplasm. It localises to the nucleus. Transcriptional activator that specifically binds DNA sequence 5'-AGAAnnTTCT-3' known as heat shock promoter elements (HSE). The protein is Heat stress transcription factor A-1a (HSFA1A) of Arabidopsis thaliana (Mouse-ear cress).